Reading from the N-terminus, the 136-residue chain is Galectin-7 (136 aa).

The 131-residue stretch at 6–136 (HKTPLPQGVR…DVQLHSVKIF (131 aa)) folds into the Galectin domain. 70–76 (WGREERG) is a binding site for a beta-D-galactoside.

As to quaternary structure, monomer.

The protein resides in the cytoplasm. The protein localises to the nucleus. It localises to the secreted. Could be involved in cell-cell and/or cell-matrix interactions necessary for normal growth control. Pro-apoptotic protein that functions intracellularly upstream of JNK activation and cytochrome c release. In Rattus norvegicus (Rat), this protein is Galectin-7 (Lgals7).